The chain runs to 403 residues: Na(+)/H(+) antiporter NhaH (403 aa).

12 helical membrane-spanning segments follow: residues 7–27, 34–54, 99–119, 125–145, 168–188, 196–216, 228–245, 250–272, 282–302, 311–331, 345–365, and 373–393; these read VFIQ…IAKL, VALV…IEEA, LAFL…YFLL, VAFT…LSIF, IAVV…EMGW, FMFL…GYVF, LEVA…FIAE, SGVI…IGMS, FWDS…GLEI, WGYI…AVYI, ILIN…LSLP, and QVLL…GLTL.

The protein belongs to the monovalent cation:proton antiporter 1 (CPA1) transporter (TC 2.A.36) family.

The protein resides in the cell membrane. Na(+)/H(+) antiporter that extrudes sodium in exchange for external protons. Can also transport lithium. The protein is Na(+)/H(+) antiporter NhaH (nhaH) of Halobacillus aidingensis.